The chain runs to 556 residues: Aplysianin-A (556 aa).

Residues 1–19 (MAVRFLALGLLIFVTSCSG) form the signal peptide. N-linked (GlcNAc...) asparagine glycosylation is found at Asn-150, Asn-177, Asn-374, Asn-399, Asn-414, and Asn-430.

The protein to A.fulica achacin protein. As to quaternary structure, homotetramer. Albumen gland.

In terms of biological role, has antibacterial activity against Gram-negative and Gram-positive bacteria. This is Aplysianin-A from Aplysia kurodai (Kuroda's sea hare).